A 320-amino-acid chain; its full sequence is Delta-aminolevulinic acid dehydratase (320 aa).

Positions 119, 121, and 129 each coordinate Zn(2+). Lysine 194 serves as the catalytic Schiff-base intermediate with substrate. Residues arginine 204 and arginine 216 each coordinate 5-aminolevulinate. A Mg(2+)-binding site is contributed by glutamate 232. The Schiff-base intermediate with substrate role is filled by lysine 247. Serine 273 lines the 5-aminolevulinate pocket.

It belongs to the ALAD family. Homooctamer. Zn(2+) is required as a cofactor.

It carries out the reaction 2 5-aminolevulinate = porphobilinogen + 2 H2O + H(+). The protein operates within porphyrin-containing compound metabolism; protoporphyrin-IX biosynthesis; coproporphyrinogen-III from 5-aminolevulinate: step 1/4. Its function is as follows. Catalyzes an early step in the biosynthesis of tetrapyrroles. Binds two molecules of 5-aminolevulinate per subunit, each at a distinct site, and catalyzes their condensation to form porphobilinogen. In Methanothermus sociabilis, this protein is Delta-aminolevulinic acid dehydratase (hemB).